The following is a 912-amino-acid chain: Isoleucine--tRNA ligase (912 aa).

Residues 57-67 carry the 'HIGH' region motif; that stretch reads PYANGDIHLGT. Glu-549 provides a ligand contact to L-isoleucyl-5'-AMP. The 'KMSKS' region signature appears at 590 to 594; sequence KMSKS. Lys-593 contributes to the ATP binding site. The Zn(2+) site is built by Cys-880, Cys-883, Cys-900, and Cys-903.

It belongs to the class-I aminoacyl-tRNA synthetase family. IleS type 1 subfamily. Monomer. Requires Zn(2+) as cofactor.

The protein resides in the cytoplasm. The catalysed reaction is tRNA(Ile) + L-isoleucine + ATP = L-isoleucyl-tRNA(Ile) + AMP + diphosphate. Its function is as follows. Catalyzes the attachment of isoleucine to tRNA(Ile). As IleRS can inadvertently accommodate and process structurally similar amino acids such as valine, to avoid such errors it has two additional distinct tRNA(Ile)-dependent editing activities. One activity is designated as 'pretransfer' editing and involves the hydrolysis of activated Val-AMP. The other activity is designated 'posttransfer' editing and involves deacylation of mischarged Val-tRNA(Ile). In Fervidobacterium pennivorans (strain DSM 9078 / Ven5), this protein is Isoleucine--tRNA ligase.